Consider the following 345-residue polypeptide: Ferrochelatase (345 aa).

The Fe cation site is built by His192 and Glu295.

Belongs to the ferrochelatase family.

Its subcellular location is the cytoplasm. It carries out the reaction heme b + 2 H(+) = protoporphyrin IX + Fe(2+). It functions in the pathway porphyrin-containing compound metabolism; protoheme biosynthesis; protoheme from protoporphyrin-IX: step 1/1. Functionally, catalyzes the ferrous insertion into protoporphyrin IX. The chain is Ferrochelatase from Opitutus terrae (strain DSM 11246 / JCM 15787 / PB90-1).